Here is a 32-residue protein sequence, read N- to C-terminus: Photosystem II reaction center protein Z (32 aa).

A helical membrane pass occupies residues 9–31 (FILLGAVTWAILVFIVGSLNSYV).

This sequence belongs to the PsbZ family. In terms of assembly, PSII is composed of 1 copy each of membrane proteins PsbA, PsbB, PsbC, PsbD, PsbE, PsbF, PsbH, PsbI, PsbJ, PsbK, PsbL, PsbM, PsbT, PsbY, PsbZ, Psb30/Ycf12, at least 3 peripheral proteins of the oxygen-evolving complex and a large number of cofactors. It forms dimeric complexes.

Its subcellular location is the plastid. It is found in the chloroplast thylakoid membrane. In terms of biological role, may control the interaction of photosystem II (PSII) cores with the light-harvesting antenna, regulates electron flow through the 2 photosystem reaction centers. PSII is a light-driven water plastoquinone oxidoreductase, using light energy to abstract electrons from H(2)O, generating a proton gradient subsequently used for ATP formation. The polypeptide is Photosystem II reaction center protein Z (Euglena stellata).